The primary structure comprises 634 residues: Probable potassium transport system protein Kup 2 (634 aa).

Transmembrane regions (helical) follow at residues 20 to 40, 64 to 84, 110 to 130, 148 to 168, 174 to 194, 224 to 244, 258 to 278, 290 to 310, 348 to 368, 377 to 397, 405 to 425, and 430 to 450; these read FWTL…TSPL, VLSL…VLLI, FAAI…DAII, PGFD…LFLV, AAVA…MAVA, AGLL…ALYA, WLVL…AMLL, LLFP…ATII, IYIP…VFAF, AYGI…FFVM, AAVA…FLMA, and IVDG…VMVT.

The protein belongs to the HAK/KUP transporter (TC 2.A.72) family.

The protein resides in the cell inner membrane. It catalyses the reaction K(+)(in) + H(+)(in) = K(+)(out) + H(+)(out). Its function is as follows. Transport of potassium into the cell. Likely operates as a K(+):H(+) symporter. In Rhodopseudomonas palustris (strain ATCC BAA-98 / CGA009), this protein is Probable potassium transport system protein Kup 2.